The primary structure comprises 349 residues: Ribosome production factor 1 (349 aa).

Residues 1–105 (MAKAGDKSSS…APPKPVPKTI (105 aa)) are disordered. Over residues 87–97 (KEREALGDKAP) the composition is skewed to basic and acidic residues. In terms of domain architecture, Brix spans 142 to 325 (PKILITTSDR…LRSLQKGTFD (184 aa)). Residues 303–320 (VGIQELGPRFTLKLRSLQ) form an RNA-binding region.

It is found in the nucleus. The protein localises to the nucleolus. May be required for ribosome biogenesis. The chain is Ribosome production factor 1 (RPF1) from Pongo abelii (Sumatran orangutan).